The primary structure comprises 306 residues: D-aminoacyl-tRNA deacylase (306 aa).

The protein belongs to the DtdA deacylase family. Monomer. Zn(2+) is required as a cofactor.

It carries out the reaction a D-aminoacyl-tRNA + H2O = a tRNA + a D-alpha-amino acid + H(+). The catalysed reaction is glycyl-tRNA(Ala) + H2O = tRNA(Ala) + glycine + H(+). Functionally, D-aminoacyl-tRNA deacylase with broad substrate specificity. By recycling D-aminoacyl-tRNA to D-amino acids and free tRNA molecules, this enzyme counteracts the toxicity associated with the formation of D-aminoacyl-tRNA entities in vivo. This Methanosarcina barkeri (strain Fusaro / DSM 804) protein is D-aminoacyl-tRNA deacylase.